Consider the following 37-residue polypeptide: Potassium channel toxin alpha-KTx 4.8 (37 aa).

Disulfide bonds link C13–C33 and C17–C35.

The protein belongs to the short scorpion toxin superfamily. Potassium channel inhibitor family. Alpha-KTx 04 subfamily. Expressed by the venom gland.

The protein resides in the secreted. Its function is as follows. Reversible blocker of voltage-gated potassium channel Kv1.2/KCNA2 (Kd=65 nM) and calcium-activated potassium channels KCa2.2/KCNN2 (Kd=575 nM) and KCa3.1/KCNN4 (Kd=59 nM). The protein is Potassium channel toxin alpha-KTx 4.8 of Centruroides margaritatus (Central American bark Scorpion).